The chain runs to 452 residues: Exodeoxyribonuclease 7 large subunit (452 aa).

It belongs to the XseA family. In terms of assembly, heterooligomer composed of large and small subunits.

It is found in the cytoplasm. The enzyme catalyses Exonucleolytic cleavage in either 5'- to 3'- or 3'- to 5'-direction to yield nucleoside 5'-phosphates.. Functionally, bidirectionally degrades single-stranded DNA into large acid-insoluble oligonucleotides, which are then degraded further into small acid-soluble oligonucleotides. The protein is Exodeoxyribonuclease 7 large subunit of Bacillus cereus (strain B4264).